A 465-amino-acid polypeptide reads, in one-letter code: Ribulose bisphosphate carboxylase large chain (465 aa).

Position 4 is an N6,N6,N6-trimethyllysine (Lys-4). Residues Asn-113 and Thr-163 each contribute to the substrate site. Lys-165 serves as the catalytic Proton acceptor. A substrate-binding site is contributed by Lys-167. Residues Lys-191, Asp-193, and Glu-194 each contribute to the Mg(2+) site. Lys-191 carries the N6-carboxylysine modification. Residue His-284 is the Proton acceptor of the active site. Arg-285, His-317, and Ser-369 together coordinate substrate.

The protein belongs to the RuBisCO large chain family. Type I subfamily. As to quaternary structure, heterohexadecamer of 8 large chains and 8 small chains; disulfide-linked. The disulfide link is formed within the large subunit homodimers. The cofactor is Mg(2+). Post-translationally, the disulfide bond which can form in the large chain dimeric partners within the hexadecamer appears to be associated with oxidative stress and protein turnover.

It is found in the plastid. Its subcellular location is the chloroplast. The catalysed reaction is 2 (2R)-3-phosphoglycerate + 2 H(+) = D-ribulose 1,5-bisphosphate + CO2 + H2O. It carries out the reaction D-ribulose 1,5-bisphosphate + O2 = 2-phosphoglycolate + (2R)-3-phosphoglycerate + 2 H(+). In terms of biological role, ruBisCO catalyzes two reactions: the carboxylation of D-ribulose 1,5-bisphosphate, the primary event in carbon dioxide fixation, as well as the oxidative fragmentation of the pentose substrate in the photorespiration process. Both reactions occur simultaneously and in competition at the same active site. This chain is Ribulose bisphosphate carboxylase large chain, found in Dillenia indica (Elephant apple).